A 396-amino-acid polypeptide reads, in one-letter code: Peptide chain release factor 1, mitochondrial (396 aa).

N5-methylglutamine is present on Q268. A disordered region spans residues L317 to I340.

Belongs to the prokaryotic/mitochondrial release factor family. In terms of processing, methylation of glutamine in the GGQ triplet is conserved from bacteria to mammals.

The protein resides in the mitochondrion. In terms of biological role, mitochondrial peptide chain release factor that directs the termination of translation in response to the peptide chain termination codons UAA and UAG. The sequence is that of Peptide chain release factor 1, mitochondrial (MRF1) from Kluyveromyces lactis (strain ATCC 8585 / CBS 2359 / DSM 70799 / NBRC 1267 / NRRL Y-1140 / WM37) (Yeast).